Reading from the N-terminus, the 1290-residue chain is 1-phosphatidylinositol 4,5-bisphosphate phosphodiesterase gamma-1 (1290 aa).

An N-acetylalanine modification is found at Ala2. The PH 1 domain maps to 27 to 142 (RSLEVGTVMT…WIKGLTWLME (116 aa)). One can recognise an EF-hand domain in the interval 152–187 (QIERWLRKQFYSVDRNREDRISAKDLKNMLSQVNYR). Residues Asp165, Asn167, Glu169, Arg171, and Asp176 each contribute to the Ca(2+) site. Residues 320–464 (ETMNNPLSHY…LKRKILIKHK (145 aa)) enclose the PI-PLC X-box domain. Active-site residues include His335 and His380. One can recognise a PH 2; first part domain in the interval 489-523 (SIKNGILYLEDPVNHEWYPHYFVLTSSKIYYSEET). Position 506 is a phosphotyrosine (Tyr506). A disordered region spans residues 522 to 546 (ETSSDQGNEDEEEPKEASGSTELHS). SH2 domains are found at residues 550–657 (WFHG…SEPV) and 668–756 (WYHA…RYPI). A Phosphotyrosine; by SYK modification is found at Tyr771. Tyr775 is subject to Phosphotyrosine. Tyr783 bears the Phosphotyrosine; by ITK, SYK and TXK mark. The SH3 domain occupies 791 to 851 (TFKCAVKALF…PSNYVEEMIN (61 aa)). The PH 2; second part domain maps to 895–931 (FVFSISMPSVAQWSLDVAADSQEELQDWVKKIREVAQ). Positions 953–1070 (LSELVVYCRP…GYVLQPSTMR (118 aa)) constitute a PI-PLC Y-box domain. Tyr977 is subject to Phosphotyrosine. A C2 domain is found at 1071–1194 (DEAFDPFDKS…TGYRAVPLKN (124 aa)). Ser1221, Ser1227, Ser1233, and Ser1248 each carry phosphoserine. Tyr1253 is modified (phosphotyrosine). Ser1263 bears the Phosphoserine mark. The segment at 1271–1290 (FDSRERRAPRRTRVNGDNRL) is disordered.

As to quaternary structure, interacts with AGAP2 via its SH3 domain. Interacts (via SH2 domain) with RET. Interacts with FLT1 (tyrosine-phosphorylated). Interacts (via SH2 domain) with FGFR1, FGFR2, FGFR3 and FGFR4 (phosphorylated). Interacts with LAT (phosphorylated) upon TCR activation. Interacts (via SH3 domain) with the Pro-rich domain of TNK1. Associates with BLNK, VAV1, GRB2 and NCK1 in a B-cell antigen receptor-dependent fashion. Interacts with CBLB in activated T-cells; which inhibits phosphorylation. Interacts with SHB. Interacts (via SH3 domain) with the Arg/Gly-rich-flanked Pro-rich domains of KHDRBS1/SAM68. This interaction is selectively regulated by arginine methylation of KHDRBS1/SAM68. Interacts with INPP5D/SHIP1, THEMIS and CLNK. Interacts with AXL, FLT4 and KIT. Interacts with RALGPS1. Interacts (via the SH2 domains) with VIL1 (phosphorylated at C-terminus tyrosine phosphorylation sites). Interacts (via SH2 domain) with PDGFRA and PDGFRB (tyrosine phosphorylated). Interacts with PIP5K1C. Interacts with NTRK1 and NTRK2 (phosphorylated upon ligand-binding). Interacts with SYK; activates PLCG1. Interacts with GRB2, LAT and THEMIS upon TCR activation in thymocytes. Interacts with TESPA1; the association is increased with prolonged stimulation of the TCR and may facilitate the assembly of the LAT signalosome. Interacts (via C-terminal proline-rich domain (PRD)) with PLCG1 (via SH3 domain); this interaction leads to guanine nucleotide exchange from PlCG1 to DNM1 and enhances DNM1-dependent endocytosis. Ca(2+) is required as a cofactor. Ubiquitinated by CBLB in activated T-cells. Post-translationally, tyrosine phosphorylated in response to signaling via activated FLT3, KIT and PDGFRA. Tyrosine phosphorylated by activated FGFR1, FGFR2, FGFR3 and FGFR4. Tyrosine phosphorylated by activated FLT1 and KDR. Tyrosine phosphorylated by activated PDGFRB. The receptor-mediated activation of PLCG1 involves its phosphorylation by tyrosine kinases, in response to ligation of a variety of growth factor receptors and immune system receptors. For instance, SYK phosphorylates and activates PLCG1 in response to ligation of the B-cell receptor. May be dephosphorylated by PTPRJ. Phosphorylated by ITK and TXK on Tyr-783 upon TCR activation in T-cells.

The protein resides in the cell projection. It localises to the lamellipodium. Its subcellular location is the ruffle. The catalysed reaction is a 1,2-diacyl-sn-glycero-3-phospho-(1D-myo-inositol-4,5-bisphosphate) + H2O = 1D-myo-inositol 1,4,5-trisphosphate + a 1,2-diacyl-sn-glycerol + H(+). It carries out the reaction a 1,2-diacyl-sn-glycero-3-phospho-(1D-myo-inositol) + H2O = 1D-myo-inositol 1-phosphate + a 1,2-diacyl-sn-glycerol + H(+). Activated by phosphorylation on tyrosine residues. Functionally, mediates the production of the second messenger molecules diacylglycerol (DAG) and inositol 1,4,5-trisphosphate (IP3). Plays an important role in the regulation of intracellular signaling cascades. Becomes activated in response to ligand-mediated activation of receptor-type tyrosine kinases, such as PDGFRA, PDGFRB, EGFR, FGFR1, FGFR2, FGFR3 and FGFR4. Plays a role in actin reorganization and cell migration. Guanine nucleotide exchange factor that binds the GTPase DNM1 and catalyzes the dissociation of GDP, allowing a GTP molecule to bind in its place, therefore enhancing DNM1-dependent endocytosis. The sequence is that of 1-phosphatidylinositol 4,5-bisphosphate phosphodiesterase gamma-1 from Rattus norvegicus (Rat).